Consider the following 609-residue polypeptide: X-ray repair cross-complementing protein 6 (609 aa).

Residues 1-28 form a disordered region; that stretch reads MSGWESYYKTEGDEEAEEEQEENLEASG. An N-acetylserine modification is found at Ser-2. Ser-2 carries the post-translational modification Phosphoserine. Residue Ser-6 is modified to Phosphoserine; by PRKDC. The span at 12–24 shows a compositional bias: acidic residues; it reads GDEEAEEEQEENL. Ser-27 carries the post-translational modification Phosphoserine. Lys-31 (schiff-base intermediate with DNA; for 5'-deoxyribose-5-phosphate lyase activity) is an active-site residue. N6-acetyllysine is present on Lys-31. Ser-51 carries the phosphoserine; by PRKDC modification. The 208-residue stretch at 261–468 folds into the Ku domain; that stretch reads LKLNKDIVIS…VGKMKAIVEK (208 aa). The tract at residues 277–341 is DNA-binding; the sequence is VQKALKPPPI…EETEELKRFD (65 aa). Residue Lys-287 forms a Glycyl lysine isopeptide (Lys-Gly) (interchain with G-Cter in SUMO2) linkage. Residue Ser-306 is modified to Phosphoserine. 3 positions are modified to N6-acetyllysine: Lys-317, Lys-331, and Lys-338. A Glycyl lysine isopeptide (Lys-Gly) (interchain with G-Cter in SUMO2) cross-link involves residue Lys-317. Residues 373-482 are interaction with XRCC5; the sequence is SLVIGSSTLF…YRSDSFENPV (110 aa). Position 455 is a phosphothreonine (Thr-455). Lys-461 carries the post-translational modification N6-acetyllysine. Phosphoserine occurs at positions 477 and 520. A disordered region spans residues 536–562; that stretch reads PEGKVTKRKHDNEGSGSKRPKVEYSEE. N6-acetyllysine occurs at positions 539, 542, and 544. Phosphoserine is present on Ser-550. An interaction with DEAF1 region spans residues 550 to 609; the sequence is SGSKRPKVEYSEEELKTHISKGTLGKFTVPMLKEACRAYGLKSGLKKQELLEALTKHFQD. N6-acetyllysine is present on residues Lys-553 and Lys-556. Lys-556 participates in a covalent cross-link: Glycyl lysine isopeptide (Lys-Gly) (interchain with G-Cter in SUMO2). Ser-560 carries the phosphoserine modification. At Lys-570 the chain carries N6,N6,N6-trimethyllysine. The 35-residue stretch at 573–607 folds into the SAP domain; sequence LGKFTVPMLKEACRAYGLKSGLKKQELLEALTKHF. The segment at 578-583 is interaction with BAX; sequence VPMLKE.

The protein belongs to the ku70 family. In terms of assembly, forms a heterodimer with XRCC5/Ku80; heterodimerization stabilizes XRCC5 protein. Component of the core long-range non-homologous end joining (NHEJ) complex (also named DNA-PK complex) composed of PRKDC, LIG4, XRCC4, XRCC6/Ku70, XRCC5/Ku86 and NHEJ1/XLF. Additional component of the NHEJ complex includes PAXX. Following autophosphorylation, PRKDC dissociates from DNA, leading to formation of the short-range NHEJ complex, composed of LIG4, XRCC4, XRCC6/Ku70, XRCC5/Ku86 and NHEJ1/XLF. The XRCC5-XRCC6 dimer also associates with NAA15, and this complex binds to the osteocalcin promoter and activates osteocalcin expression. In addition, XRCC6 interacts with the osteoblast-specific transcription factors MSX2, RUNX2 and DLX5. Interacts with ELF3. Interacts with ATP23. The XRCC5-XRRC6 dimer associates in a DNA-dependent manner with APEX1. Binds to CDK9 isoform 2. Identified in a complex with DEAF1 and XRCC5. Interacts with DEAF1 (via the SAND domain); the interaction is direct and may be inhibited by DNA-binding. Interacts with CLU. Interacts with NR4A3; the DNA-dependent protein kinase complex DNA-PK phosphorylates and activates NR4A3 and prevents NR4A3 ubiquitinylation and degradation. Interacts with CYREN isoform 1 (CYREN-1) and isoform 4 (CYREN-2) (via KBM motif). Interacts (via N-terminus) with HSF1 (via N-terminus); this interaction is direct and prevents XRCC5/XRCC6 heterodimeric binding and non-homologous end joining (NHEJ) repair activities induced by ionizing radiation (IR). Part of the HDP-RNP complex composed of at least HEXIM1, PRKDC, XRCC5, XRCC6, paraspeckle proteins (SFPQ, NONO, PSPC1, RBM14, and MATR3) and NEAT1 RNA. Interacts with HMBOX1. Interacts with ATF7. Interacts with APLF (via KBM motif). Interacts with WRN (via KBM motif). The XRCC5-XRCC6 dimer associates with ALKBH2. Interacts with TPRN; TPRN interacts with a number of DNA damage response proteins, is recruited to sites of DNA damage and may play a role in DNA damage repair. When not acetylated, interacts with BAX. Interacts with ERCC6L2. As to quaternary structure, (Microbial infection) Interacts with human T-cell leukemia virus 1/HTLV-1 protein HBZ. Post-translationally, phosphorylation by PRKDC may enhance helicase activity. Phosphorylation of Ser-51 does not affect DNA repair. ADP-ribosylated by PARP3. In terms of processing, methylation by SETD4 leads to accumulation in the cytoplasm and is a prerequisite for acetylation, possibly due to the change of subcellular from the nucleus to the cytosol initiated by methylation, acetylation occurring in the cytosol. Post-translationally, acetylation can be catalyzed in vitro by CREBBP/CBP and KAT2B/PCAF.

It is found in the nucleus. The protein localises to the chromosome. The protein resides in the cytoplasm. Functionally, single-stranded DNA-dependent ATP-dependent helicase that plays a key role in DNA non-homologous end joining (NHEJ) by recruiting DNA-PK to DNA. Required for double-strand break repair and V(D)J recombination. Also has a role in chromosome translocation. Has a role in chromosome translocation. The DNA helicase II complex binds preferentially to fork-like ends of double-stranded DNA in a cell cycle-dependent manner. It works in the 3'-5' direction. During NHEJ, the XRCC5-XRRC6 dimer performs the recognition step: it recognizes and binds to the broken ends of the DNA and protects them from further resection. Binding to DNA may be mediated by XRCC6. The XRCC5-XRRC6 dimer acts as a regulatory subunit of the DNA-dependent protein kinase complex DNA-PK by increasing the affinity of the catalytic subunit PRKDC to DNA by 100-fold. The XRCC5-XRRC6 dimer is probably involved in stabilizing broken DNA ends and bringing them together. The assembly of the DNA-PK complex to DNA ends is required for the NHEJ ligation step. Probably also acts as a 5'-deoxyribose-5-phosphate lyase (5'-dRP lyase), by catalyzing the beta-elimination of the 5' deoxyribose-5-phosphate at an abasic site near double-strand breaks. 5'-dRP lyase activity allows to 'clean' the termini of abasic sites, a class of nucleotide damage commonly associated with strand breaks, before such broken ends can be joined. The XRCC5-XRRC6 dimer together with APEX1 acts as a negative regulator of transcription. In association with NAA15, the XRCC5-XRRC6 dimer binds to the osteocalcin promoter and activates osteocalcin expression. Plays a role in the regulation of DNA virus-mediated innate immune response by assembling into the HDP-RNP complex, a complex that serves as a platform for IRF3 phosphorylation and subsequent innate immune response activation through the cGAS-STING pathway. Negatively regulates apoptosis by interacting with BAX and sequestering it from the mitochondria. Might have deubiquitination activity, acting on BAX. The chain is X-ray repair cross-complementing protein 6 (XRCC6) from Homo sapiens (Human).